Reading from the N-terminus, the 160-residue chain is Sec-independent protein translocase protein TatB (160 aa).

The helical transmembrane segment at 1-21 threads the bilayer; it reads MIDLGVSKIALIGAVALIVIG. 2 disordered regions span residues 70–100 and 133–160; these read ARDV…STAT and RSGV…SSSF. The span at 89-100 shows a compositional bias: polar residues; that stretch reads SDATGSDASTAT.

Belongs to the TatB family. In terms of assembly, the Tat system comprises two distinct complexes: a TatABC complex, containing multiple copies of TatA, TatB and TatC subunits, and a separate TatA complex, containing only TatA subunits. Substrates initially bind to the TatABC complex, which probably triggers association of the separate TatA complex to form the active translocon.

It is found in the cell inner membrane. Its function is as follows. Part of the twin-arginine translocation (Tat) system that transports large folded proteins containing a characteristic twin-arginine motif in their signal peptide across membranes. Together with TatC, TatB is part of a receptor directly interacting with Tat signal peptides. TatB may form an oligomeric binding site that transiently accommodates folded Tat precursor proteins before their translocation. The chain is Sec-independent protein translocase protein TatB from Polaromonas sp. (strain JS666 / ATCC BAA-500).